A 250-amino-acid chain; its full sequence is Flavin-dependent thymidylate synthase (250 aa).

One can recognise a ThyX domain in the interval 7–233 (LRVQLIAKTD…PAVFADFEVT (227 aa)). Residues Ser71, 95-97 (RHR), and Gln103 contribute to the FAD site. DUMP contacts are provided by residues 92-95 (ELIR), 103-107 (QLSQR), and Arg172. Positions 95–105 (RHRHFSYSQLS) match the ThyX motif motif. FAD is bound by residues 188-190 (NYR) and His194. Position 199 (Arg199) interacts with dUMP. Arg199 serves as the catalytic Involved in ionization of N3 of dUMP, leading to its activation.

This sequence belongs to the thymidylate synthase ThyX family. In terms of assembly, homotetramer. It depends on FAD as a cofactor.

The catalysed reaction is dUMP + (6R)-5,10-methylene-5,6,7,8-tetrahydrofolate + NADPH + H(+) = dTMP + (6S)-5,6,7,8-tetrahydrofolate + NADP(+). It participates in pyrimidine metabolism; dTTP biosynthesis. In terms of biological role, catalyzes the reductive methylation of 2'-deoxyuridine-5'-monophosphate (dUMP) to 2'-deoxythymidine-5'-monophosphate (dTMP) while utilizing 5,10-methylenetetrahydrofolate (mTHF) as the methyl donor, and NADPH and FADH(2) as the reductant. This chain is Flavin-dependent thymidylate synthase, found in Mycobacterium bovis (strain ATCC BAA-935 / AF2122/97).